Here is a 547-residue protein sequence, read N- to C-terminus: Elongator complex protein 3 (547 aa).

Positions 82–372 (RTASGIAVVA…YRVQRDIPMP (291 aa)) constitute a Radical SAM core domain. Residues Cys-99, Cys-109, and Cys-112 each coordinate [4Fe-4S] cluster. The residue at position 161 (Ser-161) is a Phosphoserine. Lys-164 is an acetyl-CoA binding site. Position 202 is a phosphotyrosine (Tyr-202). Lys-229 is modified (N6-methyllysine). Tyr-251 carries the phosphotyrosine modification. Residues 396–547 (IQCRDVRTRE…QGPYMVKTLE (152 aa)) form the N-acetyltransferase domain. Acetyl-CoA contacts are provided by residues 474–477 (ELHV), 497–499 (FGM), and Tyr-530.

It belongs to the ELP3 family. In terms of assembly, component of the elongator complex which consists of ELP1, ELP2, ELP3, ELP4, ELP5 and ELP6. ELP1, ELP2 and ELP3 form the elongator core complex. Interacts with alpha-tubulin. [4Fe-4S] cluster serves as cofactor. In terms of processing, tyrosine-phosphorylated; phosphorylation on Tyr-202 does not affect elongator complex integrity or ELP3 protein stability. Also serine/threonine-phosphorylated.

It localises to the cytoplasm. Its subcellular location is the nucleus. It carries out the reaction uridine(34) in tRNA + acetyl-CoA + S-adenosyl-L-methionine + H2O = 5-(carboxymethyl)uridine(34) in tRNA + 5'-deoxyadenosine + L-methionine + CoA + 2 H(+). It participates in tRNA modification; 5-methoxycarbonylmethyl-2-thiouridine-tRNA biosynthesis. Catalytic tRNA acetyltransferase subunit of the elongator complex which is required for multiple tRNA modifications, including mcm5U (5-methoxycarbonylmethyl uridine), mcm5s2U (5-methoxycarbonylmethyl-2-thiouridine), and ncm5U (5-carbamoylmethyl uridine). In the elongator complex, acts as a tRNA uridine(34) acetyltransferase by mediating formation of carboxymethyluridine in the wobble base at position 34 in tRNAs. May also act as a protein lysine acetyltransferase by mediating acetylation of target proteins; such activity is however unclear in vivo and recent evidences suggest that ELP3 primarily acts as a tRNA acetyltransferase. Involved in neurogenesis: regulates the migration and branching of projection neurons in the developing cerebral cortex, through a process depending on alpha-tubulin acetylation. Required for acetylation of GJA1 in the developing cerebral cortex. In Bos taurus (Bovine), this protein is Elongator complex protein 3.